The chain runs to 294 residues: Putative glutamine amidotransferase HI_1037 (294 aa).

Residue C18 is part of the active site. A Glutamine amidotransferase type-2 domain is found at 18 to 266 (CQLLGMNCNT…NGGFVFFKNG (249 aa)).

The chain is Putative glutamine amidotransferase HI_1037 from Haemophilus influenzae (strain ATCC 51907 / DSM 11121 / KW20 / Rd).